Reading from the N-terminus, the 467-residue chain is Acyl-lipid (8-3)-desaturase B (467 aa).

Residues 12 to 89 (LKLYTWDEVS…IKQYEIGYIS (78 aa)) enclose the Cytochrome b5 heme-binding domain. Residues His47 and His70 each contribute to the heme site. A run of 2 helical transmembrane segments spans residues 123–143 (VSVGVFTRMVLIYLFLFVTYY) and 152–172 (FWLNCIFAVLYGVANSLFGLH). A Histidine box-1 motif is present at residues 175 to 179 (HDACH). The helical transmembrane segment at 187 to 207 (MTWKILGATFDLFAGASFYAW) threads the bilayer. The short motif at 211–216 (HVIGHH) is the Histidine box-2 element. Transmembrane regions (helical) follow at residues 293–313 (AIFILGKLVFIISRFILPLIY) and 317–337 (FSHLICFFLISELVLGWYLAI). The short motif at 400–404 (QVIHH) is the Histidine box-3 element.

The protein belongs to the fatty acid desaturase type 1 family. Fe(2+) is required as a cofactor.

The protein localises to the membrane. The catalysed reaction is an (8Z,11Z,14Z)-icosatrienoyl-containing glycerolipid + 2 Fe(II)-[cytochrome b5] + O2 + 2 H(+) = (5Z,8Z,11Z,14Z)-eicosatetraenoyl-containing glycerolipid + 2 Fe(III)-[cytochrome b5] + 2 H2O. The enzyme catalyses an (8Z,11Z,14Z,17Z)-eicosatetraenoyl-containing glycerolipid + 2 Fe(II)-[cytochrome b5] + O2 + 2 H(+) = a (5Z,8Z,11Z,14Z,17Z)-eicosapentaenoyl-containing glycerolipid + 2 Fe(III)-[cytochrome b5] + 2 H2O. In terms of biological role, fatty acid desaturase that introduces a cis double bond at the 5-position in 18-carbon polyunsaturated fatty acids. This Dictyostelium discoideum (Social amoeba) protein is Acyl-lipid (8-3)-desaturase B (fadB).